Here is an 853-residue protein sequence, read N- to C-terminus: Tape measure protein (853 aa).

Coiled coils occupy residues 360–387 (REKARLALEAARKKAEQQTQQDKNAQQQ) and 548–568 (KVTYQERLNALAQQADKFAQQ). A disordered region spans residues 370–393 (ARKKAEQQTQQDKNAQQQSDTEAS). A compositionally biased stretch (low complexity) spans 376-387 (QQTQQDKNAQQQ).

It belongs to the Lambdavirus tape measure protein family. In terms of assembly, interacts with the tail initiator complex presumably through its C-terminus domain. Interacts with the tail assembly protein G. Interacts with the tail assembly protein GT. Post-translationally, cleaved into mature protein H* by an unidentified protease.

The protein localises to the virion. Its function is as follows. Serves as a ruler that controls the length of tail by stopping the tail tube polymerization and is probably released from the tail shaft during infection to facilitate DNA translocation into the host cell. Assembles into a multimeric linear form possibly stabilized by the covering tail assembly proteins G and GT. Its C-terminus fixes the tail tip complex (J, I, L, K), thereby forming the tail assembly initiator complex. Tail tube proteins polymerize around tape measure protein, displacing the tail assembly protein G and GT. When the tail reaches the length specified by the tape measure protein, it stops and becomes capped by the tail terminator protein. Upon tail assembly, tape measure protein is cleaved into a form called H*, that plays a role later during virion entry in a new cell. Once assembled, the virion is released and can infect new cells by binding to the entry receptor LambB. After opening of a pore on the external membrane, the entry protein H* protein is probably released in the periplasmic space for successful DNA injection. The polypeptide is Tape measure protein (Escherichia phage lambda (Bacteriophage lambda)).